Consider the following 83-residue polypeptide: Large ribosomal subunit protein uL24 (83 aa).

The protein belongs to the universal ribosomal protein uL24 family. In terms of assembly, part of the 50S ribosomal subunit.

In terms of biological role, one of two assembly initiator proteins, it binds directly to the 5'-end of the 23S rRNA, where it nucleates assembly of the 50S subunit. Functionally, one of the proteins that surrounds the polypeptide exit tunnel on the outside of the subunit. This chain is Large ribosomal subunit protein uL24, found in Symbiobacterium thermophilum (strain DSM 24528 / JCM 14929 / IAM 14863 / T).